A 763-amino-acid polypeptide reads, in one-letter code: Putative alpha-1,3-mannosyltransferase MNN15 (763 aa).

The Cytoplasmic segment spans residues 1–7 (MRFTLKK). Residues 8–28 (IFFVFLTLLIISIGYLLLQSV) form a helical membrane-spanning segment. Over 29-763 (DLQRIRELLH…KDATTVRLRI (735 aa)) the chain is Lumenal. N71, N157, and N169 each carry an N-linked (GlcNAc...) asparagine glycan. Residues 617–659 (LVPPDLPNQREPGSPPDTKPEMEFRKSWKSRKKDTDEINEKLP) are disordered. A compositionally biased stretch (basic and acidic residues) spans 649-659 (KDTDEINEKLP).

The protein belongs to the MNN1/MNT family.

It localises to the golgi apparatus membrane. The protein operates within protein modification; protein glycosylation. In terms of biological role, responsible for addition of the terminal mannose residues to the outer chain of core N-linked polysaccharides and to O-linked mannotriose. Implicated in late Golgi modifications. The polypeptide is Putative alpha-1,3-mannosyltransferase MNN15 (MNN15) (Candida albicans (strain SC5314 / ATCC MYA-2876) (Yeast)).